A 97-amino-acid chain; its full sequence is uncharacterized protein (97 aa).

This is an uncharacterized protein from Escherichia coli O157:H7.